A 119-amino-acid chain; its full sequence is Large ribosomal subunit protein uL18 (119 aa).

The protein belongs to the universal ribosomal protein uL18 family. As to quaternary structure, part of the 50S ribosomal subunit; part of the 5S rRNA/L5/L18/L25 subcomplex. Contacts the 5S and 23S rRNAs.

In terms of biological role, this is one of the proteins that bind and probably mediate the attachment of the 5S RNA into the large ribosomal subunit, where it forms part of the central protuberance. This is Large ribosomal subunit protein uL18 from Oceanobacillus iheyensis (strain DSM 14371 / CIP 107618 / JCM 11309 / KCTC 3954 / HTE831).